Reading from the N-terminus, the 327-residue chain is UDP-glucose 4-epimerase (327 aa).

Thr-119 provides a ligand contact to substrate. Tyr-143 serves as the catalytic Proton acceptor.

This sequence belongs to the NAD(P)-dependent epimerase/dehydratase family. NAD(+) serves as cofactor.

The enzyme catalyses UDP-alpha-D-glucose = UDP-alpha-D-galactose. Its pathway is carbohydrate metabolism; galactose metabolism. The protein operates within glycan metabolism; exopolysaccharide biosynthesis. This is UDP-glucose 4-epimerase (exoB) from Rhizobium leguminosarum bv. trifolii.